A 429-amino-acid chain; its full sequence is Adenylosuccinate synthetase (429 aa).

Residues 12–18 and 40–42 each bind GTP; these read GDEGKGK and GHT. Residue Asp13 is the Proton acceptor of the active site. Mg(2+) contacts are provided by Asp13 and Gly40. IMP contacts are provided by residues 13-16, 38-41, Thr129, Arg143, Gln223, Thr238, and Arg302; these read DEGK and NAGH. His41 (proton donor) is an active-site residue. Residue 298–304 participates in substrate binding; sequence TVTGRAR. GTP is bound by residues Arg304, 330-332, and 412-414; these read KLD and STS.

The protein belongs to the adenylosuccinate synthetase family. Homodimer. The cofactor is Mg(2+).

The protein resides in the cytoplasm. The enzyme catalyses IMP + L-aspartate + GTP = N(6)-(1,2-dicarboxyethyl)-AMP + GDP + phosphate + 2 H(+). It participates in purine metabolism; AMP biosynthesis via de novo pathway; AMP from IMP: step 1/2. In terms of biological role, plays an important role in the de novo pathway of purine nucleotide biosynthesis. Catalyzes the first committed step in the biosynthesis of AMP from IMP. This chain is Adenylosuccinate synthetase, found in Acidiphilium cryptum (strain JF-5).